The sequence spans 199 residues: GTP cyclohydrolase 1 (199 aa).

Positions 89, 92, and 161 each coordinate Zn(2+).

Belongs to the GTP cyclohydrolase I family. As to quaternary structure, homomer.

It carries out the reaction GTP + H2O = 7,8-dihydroneopterin 3'-triphosphate + formate + H(+). It participates in cofactor biosynthesis; 7,8-dihydroneopterin triphosphate biosynthesis; 7,8-dihydroneopterin triphosphate from GTP: step 1/1. The polypeptide is GTP cyclohydrolase 1 (Bifidobacterium longum (strain DJO10A)).